The primary structure comprises 359 residues: 5-amino-6-(D-ribitylamino)uracil--L-tyrosine 4-hydroxyphenyl transferase 1 (359 aa).

In terms of domain architecture, Radical SAM core spans Val-45–Lys-282. Cys-59, Cys-63, and Cys-66 together coordinate [4Fe-4S] cluster.

This sequence belongs to the radical SAM superfamily. CofH family. In terms of assembly, consists of two subunits, CofG and CofH. [4Fe-4S] cluster serves as cofactor.

The enzyme catalyses 5-amino-6-(D-ribitylamino)uracil + L-tyrosine + S-adenosyl-L-methionine = 5-amino-5-(4-hydroxybenzyl)-6-(D-ribitylimino)-5,6-dihydrouracil + 2-iminoacetate + 5'-deoxyadenosine + L-methionine + H(+). The protein operates within cofactor biosynthesis; coenzyme F0 biosynthesis. Its function is as follows. Catalyzes the radical-mediated synthesis of 5-amino-5-(4-hydroxybenzyl)-6-(D-ribitylimino)-5,6-dihydrouracil from 5-amino-6-(D-ribitylamino)uracil and L-tyrosine. This Methanococcus maripaludis (strain DSM 14266 / JCM 13030 / NBRC 101832 / S2 / LL) protein is 5-amino-6-(D-ribitylamino)uracil--L-tyrosine 4-hydroxyphenyl transferase 1.